The primary structure comprises 104 residues: Phycoerythrin alpha-2 chain, chloroplastic (104 aa).

A chloroplast-targeting transit peptide spans 1-37; sequence MSAKIIAFSAVVATASAFAPTAGFVPRLRSGATSVNM. Lysine 41 carries the 5-hydroxylysine modification. 15,16-dihydrobiliverdin is bound by residues cysteine 56 and arginine 58. The segment at 61 to 63 is 15,16-dihydrobiliverdin chromophore; that stretch reads KEY. Residue lysine 78 participates in 15,16-dihydrobiliverdin binding.

It belongs to the phycoerythrin family. In terms of assembly, heterotetramer of 2 different alpha chains and 2 identical beta chains. The subunit composition could comprise of any combination of 2 out of 4 different alpha units with an invariant beta unit. Contains one covalently linked 15,16-dihydrobiliverdin chromophore.

Its subcellular location is the plastid. It localises to the chloroplast thylakoid membrane. In terms of biological role, light-harvesting photosynthetic tetrapyrrole chromophore-protein from the phycobiliprotein complex. This is Phycoerythrin alpha-2 chain, chloroplastic (cpeA2) from Rhodomonas sp. (strain CS 24) (Chroomonas sp. (strain CS24)).